The chain runs to 185 residues: Lipopolysaccharide export system protein LptA (185 aa).

Residues 1–27 (MKFKTNKLSLNLVLASSLLAASIPAFA) form the signal peptide. The segment at 166 to 185 (PSQLQDKNNKGQTPAQKKGN) is disordered.

This sequence belongs to the LptA family. In terms of assembly, component of the lipopolysaccharide transport and assembly complex.

Its subcellular location is the periplasm. In terms of biological role, involved in the assembly of lipopolysaccharide (LPS). Required for the translocation of LPS from the inner membrane to the outer membrane. May form a bridge between the inner membrane and the outer membrane, via interactions with LptC and LptD, thereby facilitating LPS transfer across the periplasm. This is Lipopolysaccharide export system protein LptA from Escherichia coli O157:H7.